The following is a 346-amino-acid chain: MKVLGIETSCDDCCVAVVENGIHILSNIKLNQPEHKKYYGIVPEIASRLHTEAIMSVCIKALKKANTKISEIDLIAVTSRPGLIGSLIVGLNFAKGLAISLKKPIICIDHILGHLYAPLMHSKIEYPFISLLLSGGHTLIAKQKNFDDVEILGRTLDDACGEAFDKVAKHYDMGFPGGPNIEQISKNGDENTFQFPVTTFKKKENWYDFSYSGLKTACIHQLEKFKSKDNPTTKNNIAASFQKAAFENLITPLKRAIKDTQINKLVIAGGVASNLYLREKIDKLKIQTYYPPLDLCTDNGAMIAGLGFNMYLKYGESPIEIDANSRIENYKNQYRGKNNEKNFSNA.

Fe cation-binding residues include histidine 110 and histidine 114. Residues 132-136 (LLSGG), aspartate 165, glycine 178, and asparagine 274 each bind substrate. Residue aspartate 298 participates in Fe cation binding.

This sequence belongs to the KAE1 / TsaD family. Fe(2+) is required as a cofactor.

It localises to the cytoplasm. The catalysed reaction is L-threonylcarbamoyladenylate + adenosine(37) in tRNA = N(6)-L-threonylcarbamoyladenosine(37) in tRNA + AMP + H(+). Required for the formation of a threonylcarbamoyl group on adenosine at position 37 (t(6)A37) in tRNAs that read codons beginning with adenine. Is involved in the transfer of the threonylcarbamoyl moiety of threonylcarbamoyl-AMP (TC-AMP) to the N6 group of A37, together with TsaE and TsaB. TsaD likely plays a direct catalytic role in this reaction. The polypeptide is tRNA N6-adenosine threonylcarbamoyltransferase (Borreliella burgdorferi (strain ZS7) (Borrelia burgdorferi)).